We begin with the raw amino-acid sequence, 272 residues long: MWPLWLLASLLALSQALPFEQKAFWDFTLDDGLPMLNDEEASGADSTSGIPDLDALPPTFSAMCPFGCHCHLRVVQCSDLGLKAVPKEISPDTTLLDLQNNDISELRKDDFKGLQHLYALVLVNNKISRSTRRPSAPDGLKLNYLRISEAKLTGIPKDLPETLNELHLDHNKIQAIELEDLLRYSKLYRLGLGHNQIRMIENGSLSFLPTLRELHLDNNKLSRVPAGLPDLKLLQVVYLHTNNITKVGVNDFCPVGFGVKRAYYNGISLFNN.

An N-terminal signal peptide occupies residues 1 to 16; the sequence is MWPLWLLASLLALSQA. Positions 17 to 37 are excised as a propeptide; sequence LPFEQKAFWDFTLDDGLPMLN. 2 O-linked (Xyl...) (glycosaminoglycan) serine glycosylation sites follow: Ser-42 and Ser-48. Positions 55–91 constitute an LRRNT domain; sequence ALPPTFSAMCPFGCHCHLRVVQCSDLGLKAVPKEISP. 2 disulfides stabilise this stretch: Cys-64/Cys-70 and Cys-68/Cys-77. LRR repeat units follow at residues 92-113, 116-137, 138-161, 162-183, 186-209, 210-232, 233-254, and 255-272; these read DTTLLDLQNNDISELRKDDFKG, HLYALVLVNNKISRSTRRPSAP, DGLKLNYLRISEAKLTGIPKDLPE, TLNELHLDHNKIQAIELEDLLR, KLYRLGLGHNQIRMIENGSLSFLP, TLRELHLDNNKLSRVPAGLPDLK, LLQVVYLHTNNITKVGVNDFCP, and VGFGVKRAYYNGISLFNN.

It belongs to the small leucine-rich proteoglycan (SLRP) family. SLRP class I subfamily. Homodimer. Forms a ternary complex with MFAP2 and ELN. Post-translationally, the two attached glycosaminoglycan chains can be either chondroitin sulfate or dermatan sulfate. Found in several connective tissues, especially in articular cartilages.

It is found in the secreted. The protein resides in the extracellular space. Its subcellular location is the extracellular matrix. Its function is as follows. May be involved in collagen fiber assembly. In Sus scrofa (Pig), this protein is Biglycan (BGN).